Reading from the N-terminus, the 452-residue chain is Mitochondrial distribution and morphology protein 34 (452 aa).

The SMP-LTD domain maps to 1 to 196; that stretch reads MSFRVKGWSD…LPSIIYKMSR (196 aa).

It belongs to the MDM34 family. In terms of assembly, component of the ER-mitochondria encounter structure (ERMES) or MDM complex, composed of mmm1, mdm10, mdm12 and mdm34.

Its subcellular location is the mitochondrion outer membrane. Component of the ERMES/MDM complex, which serves as a molecular tether to connect the endoplasmic reticulum (ER) and mitochondria. Components of this complex are involved in the control of mitochondrial shape and protein biogenesis, and function in nonvesicular lipid trafficking between the ER and mitochondria. Mdm34 is required for the interaction of the ER-resident membrane protein mmm1 and the outer mitochondrial membrane-resident beta-barrel protein mdm10. This chain is Mitochondrial distribution and morphology protein 34, found in Schizosaccharomyces pombe (strain 972 / ATCC 24843) (Fission yeast).